A 223-amino-acid polypeptide reads, in one-letter code: ATP phosphoribosyltransferase (223 aa).

It belongs to the ATP phosphoribosyltransferase family. Short subfamily. As to quaternary structure, heteromultimer composed of HisG and HisZ subunits.

It is found in the cytoplasm. The catalysed reaction is 1-(5-phospho-beta-D-ribosyl)-ATP + diphosphate = 5-phospho-alpha-D-ribose 1-diphosphate + ATP. The protein operates within amino-acid biosynthesis; L-histidine biosynthesis; L-histidine from 5-phospho-alpha-D-ribose 1-diphosphate: step 1/9. Catalyzes the condensation of ATP and 5-phosphoribose 1-diphosphate to form N'-(5'-phosphoribosyl)-ATP (PR-ATP). Has a crucial role in the pathway because the rate of histidine biosynthesis seems to be controlled primarily by regulation of HisG enzymatic activity. This chain is ATP phosphoribosyltransferase, found in Halothermothrix orenii (strain H 168 / OCM 544 / DSM 9562).